The chain runs to 350 residues: Homeobox-leucine zipper protein HOX5 (350 aa).

Residues 83–142 constitute a DNA-binding region (homeobox); sequence APEKKRRLTAEQVQMLERSFEEENKLEPERKTELARRLGMAPRQVAVWFQNRRARWKTKQ. Residues 141–185 form a leucine-zipper region; the sequence is KQLEHDFDRLKAAYDALAADHHALLSDNDRLRAQVISLTEKLQDK. The segment at 180 to 254 is disordered; that stretch reads EKLQDKETSP…TNDDGDGGGA (75 aa). Low complexity predominate over residues 188-198; that stretch reads SPSSATITTAA.

The protein belongs to the HD-ZIP homeobox family. Class I subfamily. As to quaternary structure, homodimer. May form a heterodimer with HOX4. As to expression, expressed in seedlings, roots, leaves, nodes, internodes, flowers and embryo.

The protein localises to the nucleus. Probable transcription activator that binds to the DNA sequence 5'-CAAT[AT]ATTG-3'. The protein is Homeobox-leucine zipper protein HOX5 (HOX5) of Oryza sativa subsp. indica (Rice).